Reading from the N-terminus, the 931-residue chain is Isoleucine--tRNA ligase (931 aa).

A compositionally biased stretch (polar residues) spans 1–14; that stretch reads MDYSKTLNLPQTQF. The segment at 1–25 is disordered; it reads MDYSKTLNLPQTQFPMRGNLPQREP. The 'HIGH' region motif lies at 57 to 67; that stretch reads PYANGHIHLGH. E559 serves as a coordination point for L-isoleucyl-5'-AMP. Residues 600-604 carry the 'KMSKS' region motif; sequence KMSKS. Residue K603 participates in ATP binding. C898, C901, C918, and C921 together coordinate Zn(2+).

It belongs to the class-I aminoacyl-tRNA synthetase family. IleS type 1 subfamily. In terms of assembly, monomer. Zn(2+) serves as cofactor.

It localises to the cytoplasm. The catalysed reaction is tRNA(Ile) + L-isoleucine + ATP = L-isoleucyl-tRNA(Ile) + AMP + diphosphate. Its function is as follows. Catalyzes the attachment of isoleucine to tRNA(Ile). As IleRS can inadvertently accommodate and process structurally similar amino acids such as valine, to avoid such errors it has two additional distinct tRNA(Ile)-dependent editing activities. One activity is designated as 'pretransfer' editing and involves the hydrolysis of activated Val-AMP. The other activity is designated 'posttransfer' editing and involves deacylation of mischarged Val-tRNA(Ile). This chain is Isoleucine--tRNA ligase, found in Desulforamulus reducens (strain ATCC BAA-1160 / DSM 100696 / MI-1) (Desulfotomaculum reducens).